Reading from the N-terminus, the 455-residue chain is Bifunctional protein GlmU (455 aa).

Positions 1 to 232 are pyrophosphorylase; that stretch reads MASITGALIL…DPNLLGVNDP (232 aa). UDP-N-acetyl-alpha-D-glucosamine contacts are provided by residues 10-13, K24, Q75, and 80-81; these read LAAG and GT. D106 contacts Mg(2+). UDP-N-acetyl-alpha-D-glucosamine contacts are provided by G141, E155, N172, and N230. N230 contacts Mg(2+). The linker stretch occupies residues 233-253; the sequence is AELIRSEALVRARIALNWIEK. The segment at 254–455 is N-acetyltransferase; that stretch reads RVLIHAPETV…QTTLPRRRNS (202 aa). UDP-N-acetyl-alpha-D-glucosamine-binding residues include R336 and K354. H366 acts as the Proton acceptor in catalysis. Positions 369 and 380 each coordinate UDP-N-acetyl-alpha-D-glucosamine. Acetyl-CoA is bound by residues A383, 389-390, S408, A426, and R443; that span reads NY.

This sequence in the N-terminal section; belongs to the N-acetylglucosamine-1-phosphate uridyltransferase family. In the C-terminal section; belongs to the transferase hexapeptide repeat family. As to quaternary structure, homotrimer. It depends on Mg(2+) as a cofactor.

It localises to the cytoplasm. It carries out the reaction alpha-D-glucosamine 1-phosphate + acetyl-CoA = N-acetyl-alpha-D-glucosamine 1-phosphate + CoA + H(+). The enzyme catalyses N-acetyl-alpha-D-glucosamine 1-phosphate + UTP + H(+) = UDP-N-acetyl-alpha-D-glucosamine + diphosphate. Its pathway is nucleotide-sugar biosynthesis; UDP-N-acetyl-alpha-D-glucosamine biosynthesis; N-acetyl-alpha-D-glucosamine 1-phosphate from alpha-D-glucosamine 6-phosphate (route II): step 2/2. It functions in the pathway nucleotide-sugar biosynthesis; UDP-N-acetyl-alpha-D-glucosamine biosynthesis; UDP-N-acetyl-alpha-D-glucosamine from N-acetyl-alpha-D-glucosamine 1-phosphate: step 1/1. It participates in bacterial outer membrane biogenesis; LPS lipid A biosynthesis. Functionally, catalyzes the last two sequential reactions in the de novo biosynthetic pathway for UDP-N-acetylglucosamine (UDP-GlcNAc). The C-terminal domain catalyzes the transfer of acetyl group from acetyl coenzyme A to glucosamine-1-phosphate (GlcN-1-P) to produce N-acetylglucosamine-1-phosphate (GlcNAc-1-P), which is converted into UDP-GlcNAc by the transfer of uridine 5-monophosphate (from uridine 5-triphosphate), a reaction catalyzed by the N-terminal domain. This chain is Bifunctional protein GlmU, found in Nitratidesulfovibrio vulgaris (strain DSM 19637 / Miyazaki F) (Desulfovibrio vulgaris).